Consider the following 450-residue polypeptide: Putative MYST-like histone acetyltransferase 1 (450 aa).

Residues 63 to 122 (LEVGTRVMCRWRDQKLHPVKVIERRKSSTSSSPADYEYYVHYTEFNRRLDEWVKLEQLDL) form the Tudor-knot domain. In terms of domain architecture, MYST-type HAT spans 174–445 (TKVKNIAKIE…VDVSKLIWTP (272 aa)). The segment at 207–232 (LFFCEFCLNFMKRKEQLQRHMKKCDL) adopts a C2HC MYST-type zinc-finger fold. Lys-274 carries the post-translational modification N6-acetyllysine; by autocatalysis. Acetyl-CoA-binding positions include 317–319 (ILT) and 324–330 (QRKGYGK). Glu-350 acts as the Proton donor/acceptor in catalysis. Ser-354 contacts acetyl-CoA.

This sequence belongs to the MYST (SAS/MOZ) family. Post-translationally, autoacetylation at Lys-274 is required for proper function.

The protein resides in the nucleus. It carries out the reaction L-lysyl-[protein] + acetyl-CoA = N(6)-acetyl-L-lysyl-[protein] + CoA + H(+). Histone acetyltransferase which may be involved in transcriptional activation. In Oryza sativa subsp. japonica (Rice), this protein is Putative MYST-like histone acetyltransferase 1.